Consider the following 209-residue polypeptide: MGQKTHPLGFRIGITRDHKSSWFSNIKSYPKLAQEDYKIRSCIEKQLHNASISLIYIDRKVAQVQVHIHTARPGIILGKLGRGLEDLRKKLETTLKNDTQIRINLIEITDPDKEATLIAEFIVQRLEKRIAFRRVIRQAMQRAQKAKNQGIKIQVSGRLNGSEIARIESVREGRVPLQTLRAHIDYSYKTTHTIYGILGVKYGYLKEKK.

Residues 39-109 (IRSCIEKQLH…QIRINLIEIT (71 aa)) form the KH type-2 domain.

The protein belongs to the universal ribosomal protein uS3 family. In terms of assembly, part of the 30S ribosomal subunit.

The protein localises to the plastid. The protein resides in the chloroplast. The polypeptide is Small ribosomal subunit protein uS3c (rps3) (Gracilaria tenuistipitata (Red alga)).